The chain runs to 174 residues: Guided entry of tail-anchored proteins factor 1 (174 aa).

Topologically, residues 1–8 (MSSAAADH) are lumenal. A helical membrane pass occupies residues 9–29 (WAWLLVLSFVFGCNVLRILLP). At 30–99 (SFSSFMSRVL…VKARTAQLAK (70 aa)) the chain is on the cytoplasmic side. A coiled-coil region spans residues 39 to 94 (LQKDAEQESQMRAEIQDMKQELSTVNMMDEFARYARLERKINKMTDKLKTHVKART). Residues 39–97 (LQKDAEQESQMRAEIQDMKQELSTVNMMDEFARYARLERKINKMTDKLKTHVKARTAQL) form an interaction with GET3/TRC40 region. A helical membrane pass occupies residues 100–120 (IKWVISVAFYVLQAALMISLI). The Lumenal portion of the chain corresponds to 121–148 (WKYYSVPVAVVPSKWITPLDRLVAFPTR). The helical transmembrane segment at 149-169 (VAGGVGITCWILVCNKVVAIV) threads the bilayer. Topologically, residues 170 to 174 (LHPFS) are cytoplasmic.

This sequence belongs to the WRB/GET1 family. As to quaternary structure, component of the Golgi to ER traffic (GET) complex, which is composed of GET1/WRB, CAMLG/GET2 and GET3/TRC40. Within the complex, GET1 and CAMLG form a heterotetramer which is stabilized by phosphatidylinositol binding and which binds to the GET3 homodimer. Interacts with CAMLG (via C-terminus). GET3 shows a higher affinity for CAMLG than for GET1.

It is found in the endoplasmic reticulum membrane. Its function is as follows. Required for the post-translational delivery of tail-anchored (TA) proteins to the endoplasmic reticulum (ER). Together with CAMLG/GET2, acts as a membrane receptor for soluble GET3/TRC40, which recognizes and selectively binds the transmembrane domain of TA proteins in the cytosol. Required to ensure correct topology and ER insertion of CAMLG. This chain is Guided entry of tail-anchored proteins factor 1, found in Homo sapiens (Human).